The sequence spans 182 residues: Ribosome maturation factor RimM (182 aa).

Residues Val-103 to Phe-182 enclose the PRC barrel domain.

Belongs to the RimM family. As to quaternary structure, binds ribosomal protein uS19.

Its subcellular location is the cytoplasm. Its function is as follows. An accessory protein needed during the final step in the assembly of 30S ribosomal subunit, possibly for assembly of the head region. Essential for efficient processing of 16S rRNA. May be needed both before and after RbfA during the maturation of 16S rRNA. It has affinity for free ribosomal 30S subunits but not for 70S ribosomes. This is Ribosome maturation factor RimM from Pectobacterium atrosepticum (strain SCRI 1043 / ATCC BAA-672) (Erwinia carotovora subsp. atroseptica).